We begin with the raw amino-acid sequence, 959 residues long: Protein SEY1 homolog 1 (959 aa).

The Cytoplasmic portion of the chain corresponds to 1–767 (MQESDVFHNQ…ELAAITVHSK (767 aa)). A coiled-coil region spans residues 9-86 (NQLRVEMLKK…EEEKKEKENY (78 aa)). A disordered region spans residues 62-81 (EEKENMKVEEEEIKEEEEKK). A GB1/RHD3-type G domain is found at 123-340 (GFNYNMLSIL…NQNTYFRPIY (218 aa)). 133–140 (GPQNSGKS) is a binding site for GTP. The helical transmembrane segment at 768-788 (TPMWLILLIAFLSFDNIVYVF) threads the bilayer. At 789–791 (KSP) the chain is on the lumenal side. The chain crosses the membrane as a helical span at residues 792–812 (TLLALTLIIIGIIYSLNKIGY). At 813 to 959 (AYLIDSVISY…LNKIKEANEF (147 aa)) the chain is on the cytoplasmic side. Residues 849–868 (EAPKRKRPQKKTQDDKPKSS) form a disordered region.

The protein belongs to the TRAFAC class dynamin-like GTPase superfamily. GB1/RHD3 GTPase family. RHD3 subfamily.

It localises to the endoplasmic reticulum membrane. Probable GTP-binding protein that may be involved in cell development. The protein is Protein SEY1 homolog 1 of Entamoeba histolytica (strain ATCC 30459 / HM-1:IMSS / ABRM).